A 355-amino-acid chain; its full sequence is Cyanide hydratase (355 aa).

Positions 6–285 (YKAAAVTSEP…DGLLFVDIDL (280 aa)) constitute a CN hydrolase domain. Residue Glu-46 is the Proton acceptor of the active site. Lys-128 is a catalytic residue. The active-site Nucleophile is the Cys-163.

It belongs to the carbon-nitrogen hydrolase superfamily. Nitrilase family. In terms of assembly, oligomer of dimers, forming left-handed helical fibers.

It catalyses the reaction formamide = hydrogen cyanide + H2O. Functionally, catalyzes the hydration of cyanide to formamide. Degradation of cyanide may be important for plant pathogenic fungi in infection of cyanogenic plants. The polypeptide is Cyanide hydratase (Gibberella zeae (strain ATCC MYA-4620 / CBS 123657 / FGSC 9075 / NRRL 31084 / PH-1) (Wheat head blight fungus)).